The sequence spans 434 residues: Tol-Pal system protein TolB (434 aa).

An N-terminal signal peptide occupies residues Met-1–Ala-21. The segment at Gly-411 to Pro-434 is disordered.

Belongs to the TolB family. As to quaternary structure, the Tol-Pal system is composed of five core proteins: the inner membrane proteins TolA, TolQ and TolR, the periplasmic protein TolB and the outer membrane protein Pal. They form a network linking the inner and outer membranes and the peptidoglycan layer.

Its subcellular location is the periplasm. Its function is as follows. Part of the Tol-Pal system, which plays a role in outer membrane invagination during cell division and is important for maintaining outer membrane integrity. The protein is Tol-Pal system protein TolB of Anaeromyxobacter dehalogenans (strain 2CP-C).